The primary structure comprises 491 residues: Serine/threonine-protein kinase 3 (491 aa).

Position 1 is an N-acetylmethionine (Met1). Position 15 is a phosphoserine (Ser15). The 252-residue stretch at 27 to 278 (FDVLEKLGEG…ATQLLQHPFI (252 aa)) folds into the Protein kinase domain. ATP is bound by residues 33-41 (LGEGSYGSV) and Lys56. Thr117 carries the phosphothreonine; by PKB/AKT1 modification. Asp146 serves as the catalytic Proton acceptor. Mg(2+) is bound by residues Asn151 and Asp164. Thr180 bears the Phosphothreonine; by autocatalysis mark. Residues 291–324 (ITEGMEIKAKRHEEQQRELEDEEENSDEDELDSH) are a coiled coil. Disordered regions lie at residues 301–343 (RHEE…TSTM) and 370–392 (EDEE…QRPS). Over residues 309–321 (LEDEEENSDEDEL) the composition is skewed to acidic residues. A Phosphoserine modification is found at Ser316. The segment covering 326–343 (MVKTSSEGVGTMRATSTM) has biased composition (polar residues). Phosphothreonine is present on residues Thr336 and Thr378. Positions 381-390 (RNATSPQVQR) are enriched in polar residues. Position 384 is a phosphothreonine; by PKB/AKT1 (Thr384). Residues Ser385 and Ser444 each carry the phosphoserine modification. The 48-residue stretch at 437–484 (FDFLKNLSLEELQMRLKALDPMMEREIEELHQRYSAKRQPILDAMDAK) folds into the SARAH domain.

It belongs to the protein kinase superfamily. STE Ser/Thr protein kinase family. STE20 subfamily. As to quaternary structure, homodimer; mediated via the coiled-coil region. Interacts with NORE1, which inhibits autoactivation. Interacts with and stabilizes SAV1. Interacts with RAF1, which prevents dimerization and phosphorylation. Interacts with RASSF1. Interacts (via SARAH domain) with isoform 1 of NEK2. Interacts with ESR1 only in the presence of SAV1. Interacts with PKB/AKT1. Forms a tripartite complex with MOBKL1B and STK38. Interacts with RASSF2 (via SARAH domain). Interacts with DLG5 (via PDZ domain 3). Interacts with LATS1; this interaction is inhibited in the presence of DLG5. Interacts with MARK3 in the presence of DLG5. Interacts with RASSF5; this interaction inhibits STK3 autoactivation through heterodimerization. Interacts (when phosphorylated) with SLMAP (via FHA domain); the interaction associates STK3 with the STRIPAK complex. It depends on Mg(2+) as a cofactor. In terms of processing, autophosphorylated on two residues Thr-174 and Thr-180, leading to activation. Phosphorylation at Thr-117 and Thr-384 by PKB/AKT1, leads to inhibition of its: cleavage, kinase activity, autophosphorylation at Thr-180, binding to RASSF1 and nuclear translocation, and increase in its binding to RAF1. Phosphorylated at Ser-15 by PLK1, leading to activation. Post-translationally, proteolytically cleaved by caspase-3 during apoptosis. Proteolytic cleavage results in kinase activation and nuclear translocation of the truncated form (MST1/N). Ubiquitinated by TRIM69; leading to its redistribution to the perinuclear cytoskeleton.

It is found in the cytoplasm. Its subcellular location is the nucleus. The catalysed reaction is L-seryl-[protein] + ATP = O-phospho-L-seryl-[protein] + ADP + H(+). It carries out the reaction L-threonyl-[protein] + ATP = O-phospho-L-threonyl-[protein] + ADP + H(+). With respect to regulation, inhibited by the C-terminal non-catalytic region. Activated by caspase-cleavage. Full activation also requires homodimerization and autophosphorylation of Thr-180, which are inhibited by the proto-oncogene product RAF1. Activated by RASSF1 which acts by preventing its dephosphorylation. When autophosphorylated at Thr-180, recruits STRIPAK complex and promotes PP2A-mediated dephosphorylation and inactivation of STK3. Functionally, stress-activated, pro-apoptotic kinase which, following caspase-cleavage, enters the nucleus and induces chromatin condensation followed by internucleosomal DNA fragmentation. Key component of the Hippo signaling pathway which plays a pivotal role in organ size control and tumor suppression by restricting proliferation and promoting apoptosis. The core of this pathway is composed of a kinase cascade wherein STK3/MST2 and STK4/MST1, in complex with its regulatory protein SAV1, phosphorylates and activates LATS1/2 in complex with its regulatory protein MOB1, which in turn phosphorylates and inactivates YAP1 oncoprotein and WWTR1/TAZ. Phosphorylation of YAP1 by LATS2 inhibits its translocation into the nucleus to regulate cellular genes important for cell proliferation, cell death, and cell migration. STK3/MST2 and STK4/MST1 are required to repress proliferation of mature hepatocytes, to prevent activation of facultative adult liver stem cells (oval cells), and to inhibit tumor formation. Phosphorylates NKX2-1. Phosphorylates NEK2 and plays a role in centrosome disjunction by regulating the localization of NEK2 to centrosomes, and its ability to phosphorylate CROCC and CEP250. In conjunction with SAV1, activates the transcriptional activity of ESR1 through the modulation of its phosphorylation. Positively regulates RAF1 activation via suppression of the inhibitory phosphorylation of RAF1 on 'Ser-259'. Phosphorylates MOBKL1A and RASSF2. Phosphorylates MOBKL1B on 'Thr-74'. Acts cooperatively with MOBKL1B to activate STK38. This chain is Serine/threonine-protein kinase 3 (Stk3), found in Rattus norvegicus (Rat).